Here is a 630-residue protein sequence, read N- to C-terminus: Polyphenol oxidase A, chloroplastic (630 aa).

A disordered region spans residues 1-25 (MASLCSNSSSTSLKTPFTSSTTCLS). The transit peptide at 1-87 (MASLCSNSSS…ANAIPLAASA (87 aa)) directs the protein to the chloroplast. Intrachain disulfides connect cysteine 98/cysteine 114 and cysteine 113/cysteine 181. Cu cation contacts are provided by histidine 180, histidine 198, histidine 207, histidine 328, histidine 332, and histidine 370. The 2'-(S-cysteinyl)-histidine (Cys-His) cross-link spans 184-198 (CNGGYSIDGKVLQVH).

It belongs to the tyrosinase family. Cu(2+) serves as cofactor.

The protein resides in the plastid. Its subcellular location is the chloroplast thylakoid lumen. It catalyses the reaction 2 catechol + O2 = 2 1,2-benzoquinone + 2 H2O. In terms of biological role, catalyzes the oxidation of mono- and o-diphenols to o-diquinones. This chain is Polyphenol oxidase A, chloroplastic, found in Solanum lycopersicum (Tomato).